A 496-amino-acid polypeptide reads, in one-letter code: L-arabinose isomerase (496 aa).

Residues Glu306, Glu331, His348, and His447 each contribute to the Mn(2+) site.

This sequence belongs to the arabinose isomerase family. Mn(2+) is required as a cofactor.

The catalysed reaction is beta-L-arabinopyranose = L-ribulose. Its pathway is carbohydrate degradation; L-arabinose degradation via L-ribulose; D-xylulose 5-phosphate from L-arabinose (bacterial route): step 1/3. In terms of biological role, catalyzes the conversion of L-arabinose to L-ribulose. The polypeptide is L-arabinose isomerase (Geobacillus kaustophilus (strain HTA426)).